Reading from the N-terminus, the 686-residue chain is DNA topoisomerase 1 (686 aa).

The Toprim domain occupies 1-141 (MILIIAEKPN…KRMKFSALTK (141 aa)). Residues Glu7 and Asp107 each coordinate Mg(2+). A Topo IA-type catalytic domain is found at 156 to 574 (NFGMANAGIA…EAKERLTKIL (419 aa)). The tract at residues 196-201 (STGRVQ) is interaction with DNA. Catalysis depends on Tyr317, which acts as the O-(5'-phospho-DNA)-tyrosine intermediate. The C4-type 1 zinc-finger motif lies at 606-634 (CPKCGGDLIVKYNKKTGKRFVGCSNWPKC). The C4-type 2; atypical zinc-finger motif lies at 653-678 (CCNGAPVVIIREEDGREFEICLDINC).

This sequence belongs to the type IA topoisomerase family. As to quaternary structure, monomer. Mg(2+) is required as a cofactor.

The catalysed reaction is ATP-independent breakage of single-stranded DNA, followed by passage and rejoining.. Functionally, releases the supercoiling and torsional tension of DNA, which is introduced during the DNA replication and transcription, by transiently cleaving and rejoining one strand of the DNA duplex. Introduces a single-strand break via transesterification at a target site in duplex DNA. The scissile phosphodiester is attacked by the catalytic tyrosine of the enzyme, resulting in the formation of a DNA-(5'-phosphotyrosyl)-enzyme intermediate and the expulsion of a 3'-OH DNA strand. The free DNA strand then undergoes passage around the unbroken strand, thus removing DNA supercoils. Finally, in the religation step, the DNA 3'-OH attacks the covalent intermediate to expel the active-site tyrosine and restore the DNA phosphodiester backbone. This is DNA topoisomerase 1 from Pyrococcus horikoshii (strain ATCC 700860 / DSM 12428 / JCM 9974 / NBRC 100139 / OT-3).